The chain runs to 256 residues: Thioredoxin-dependent peroxide reductase, mitochondrial (256 aa).

The N-terminal 61 residues, 1-61, are a transit peptide targeting the mitochondrion; sequence MAAAVGRLLR…KLFSTSSSCH (61 aa). A Thioredoxin domain is found at 63–221; sequence PAVTQHAPYF…TLRLVKAFQY (159 aa). Lys83 is subject to N6-succinyllysine. Position 91 is an N6-acetyllysine; alternate (Lys91). Lys91 bears the N6-succinyllysine; alternate mark. Cys108 functions as the Cysteine sulfenic acid (-SOH) intermediate in the catalytic mechanism. Position 146 is a phosphothreonine (Thr146).

It belongs to the peroxiredoxin family. AhpC/Prx1 subfamily. In terms of assembly, homodimer; disulfide-linked, upon oxidation. 6 homodimers assemble to form a ring-like dodecamer. Interacts with NEK6. Interacts with LRRK2. Interacts with MAP3K13. Interacts with RPS6KC1 (via PX domain). In terms of processing, phosphorylated by LRRK2; phosphorylation reduces perodixase activity. The enzyme can be inactivated by further oxidation of the cysteine sulfenic acid (C(P)-SOH) to sulphinic acid (C(P)-SO2H) and sulphonic acid (C(P)-SO3H) instead of its condensation to a disulfide bond. Post-translationally, S-palmitoylated.

The protein resides in the mitochondrion. It is found in the cytoplasm. Its subcellular location is the early endosome. It carries out the reaction a hydroperoxide + [thioredoxin]-dithiol = an alcohol + [thioredoxin]-disulfide + H2O. Thiol-specific peroxidase that catalyzes the reduction of hydrogen peroxide and organic hydroperoxides to water and alcohols, respectively. Plays a role in cell protection against oxidative stress by detoxifying peroxides. Acts synergistically with MAP3K13 to regulate the activation of NF-kappa-B in the cytosol. Required for the maintenance of physical strength. The polypeptide is Thioredoxin-dependent peroxide reductase, mitochondrial (PRDX3) (Homo sapiens (Human)).